The chain runs to 1193 residues: K(+) efflux antiporter 1, chloroplastic (1193 aa).

A chloroplast-targeting transit peptide spans 1–49 (MEYASTFQRPILFHGGDGASYCFPNRLISPKGISITSGDSKVHSCFRLR). The Stromal portion of the chain corresponds to 50-585 (RNVAQSGTLN…MIPHQEVNEE (536 aa)). The disordered stretch occupies residues 103 to 135 (SLGNADSNDHRIGESSESSDETEATDLKDARVE). The stretch at 131-355 (DARVENDTDS…RAEKSLSISQ (225 aa)) forms a coiled coil. N6-acetyllysine; by NSI is present on lysine 168. Residues 351–364 (LSISQTPEETQGQL) are compositionally biased toward polar residues. Disordered stretches follow at residues 351–372 (LSISQTPEETQGQLSDEETSQE) and 421–474 (QPYE…NSPK). Residues 439 to 465 (KVVEADSEKPKINVQTKKQETQKDLPK) are compositionally biased toward basic and acidic residues. The chain crosses the membrane as a helical span at residues 586-606 (EASLFDFLWLLLASVIFVPLF). Residues 607–612 (QKIPGG) are Chloroplast intermembrane-facing. A helical membrane pass occupies residues 613–633 (SPVLGYLAAGILIGPYGLSII). Residues 634–640 (RNVHGTR) lie on the Stromal side of the membrane. Residues 641 to 661 (AIAEFGVVFLLFNIGLELSVE) form a helical membrane-spanning segment. The Chloroplast intermembrane portion of the chain corresponds to 662–668 (RLSSMKK). A helical transmembrane segment spans residues 669–689 (YVFGLGSAQVLVTAAVVGLLA). Over 690–698 (HYVAGQAGP) the chain is Stromal. Residues 699 to 719 (AAIVIGNGLALSSTAVVLQVL) form a helical membrane-spanning segment. Over 720–733 (QERGESTSRHGRAS) the chain is Chloroplast intermembrane. The chain crosses the membrane as a helical span at residues 734–754 (FSVLLFQDLAVVVLLILIPLI). Residues 755–766 (SPNSSKGGIGFQ) are Stromal-facing. A helical transmembrane segment spans residues 767 to 787 (AIAEALGLAAVKAAVAITAII). Over 788 to 827 (AGGRLLLRPIYKQIAENRNAEIFSANTLLVILGTSLLTAR) the chain is Chloroplast intermembrane. A helical membrane pass occupies residues 828-848 (AGLSMALGAFLAGLLLAETEF). Topologically, residues 849–860 (SLQVESDIAPYR) are stromal. The helical transmembrane segment at 861 to 881 (GLLLGLFFMTVGMSIDPKLLL) threads the bilayer. Over 882-883 (SN) the chain is Chloroplast intermembrane. A helical transmembrane segment spans residues 884 to 904 (FPVIVGTLGLLIVGKTMLVVI). At 905–912 (MGKLFGIS) the chain is on the stromal side. Residues 913 to 933 (IISAIRVGLLLAPGGEFAFVA) form a helical membrane-spanning segment. At 934 to 948 (FGEAVNQGIMSPQLS) the chain is on the chloroplast intermembrane side. The helical transmembrane segment at 949–969 (SLLFLVVGISMAITPWLAAGG) threads the bilayer. Residues 970-1193 (QLIASRFELH…QIIEGGTVVI (224 aa)) are Stromal-facing. Residues 995-1112 (QGHIIICGFG…EKAGATAVVP (118 aa)) enclose the RCK N-terminal domain. The interval 1165–1184 (GYSRTSKPKPQPSDASGDNQ) is disordered.

This sequence belongs to the monovalent cation:proton antiporter 2 (CPA2) transporter (TC 2.A.37) family. KEA (TC 2.A.37.1) subfamily. Acetylated at Lys-168 by the stromal acetyltransferase enzyme NSI. Expressed in shoots and roots. Mainly localized to leaf veins, hypocotyls, mesophylls and guard cells. Accumulates at high levels in small and dividing plastids (at protein level).

Its subcellular location is the plastid. It localises to the chloroplast inner membrane. The catalysed reaction is K(+)(in) + H(+)(out) = K(+)(out) + H(+)(in). Its activity is regulated as follows. Repressed by sodium ions Na(+). In terms of biological role, electroneutral K(+)/H(+) efflux antiporter involved in chloroplastic K(+) homeostasis and osmotic adjustment, especially during plastid division and thylakoid membrane formation. Collaboratively with KEA2, adjusts alkaline stromal pH upon light to dark transitions in plastids. Together with KEA2, critical for chloroplast development, including chloroplast RNA-metabolism (e.g. rRNA maturation, polysome loading and RNA-protein interactions) and plastid gene expression (PGE), ion homeostasis, and photosynthesis. Contributes, during early seedling development, to the regulation of photosynthesis and abscisic acid- (ABA-) mediated primary root growth in a sucrose-dependent manner. Involved in the regulation of reactive oxygen and nitrogen species (ROS and RNS) metabolism. Required in roots for rapid hyperosmotic-induced Ca(2+) responses and for osmo-sensory potentiation in hyperosmotic conditions. May counteract resilience to drought and salt stress, involving photorespiratory pathway and stomata closure. The chain is K(+) efflux antiporter 1, chloroplastic from Arabidopsis thaliana (Mouse-ear cress).